The following is a 312-amino-acid chain: Pre-mRNA-splicing factor 38A (312 aa).

The interval 1–179 (MANRTVKDAH…VLEETEQLDP (179 aa)) is N-terminal protein interaction domain. Positions 180-312 (RVSALEEDMD…SHKKSRRGNE (133 aa)) are disordered. The segment covering 184–201 (LEEDMDDVESSEEEEDDD) has biased composition (acidic residues). Residues 202–223 (EKGRDPSPEHHRRNYRDLDRPR) show a composition bias toward basic and acidic residues. 2 stretches are compositionally biased toward basic residues: residues 224-294 (RSPS…RSHS) and 301-312 (KKSHKKSRRGNE).

This sequence belongs to the PRP38 family. In terms of assembly, component of the spliceosome B complex.

It is found in the nucleus. In terms of biological role, involved in pre-mRNA splicing as a component of the spliceosome. This is Pre-mRNA-splicing factor 38A (prpf38a) from Xenopus laevis (African clawed frog).